Reading from the N-terminus, the 207-residue chain is Urease accessory protein UreG (207 aa).

14 to 21 contributes to the GTP binding site; the sequence is GPVGSGKT.

This sequence belongs to the SIMIBI class G3E GTPase family. UreG subfamily. Homodimer. UreD, UreF and UreG form a complex that acts as a GTP-hydrolysis-dependent molecular chaperone, activating the urease apoprotein by helping to assemble the nickel containing metallocenter of UreC. The UreE protein probably delivers the nickel.

It is found in the cytoplasm. Facilitates the functional incorporation of the urease nickel metallocenter. This process requires GTP hydrolysis, probably effectuated by UreG. This chain is Urease accessory protein UreG, found in Pseudomonas entomophila (strain L48).